A 397-amino-acid chain; its full sequence is Dual-specificity RNA methyltransferase RlmN (397 aa).

Glutamate 116 functions as the Proton acceptor in the catalytic mechanism. In terms of domain architecture, Radical SAM core spans 122–366; it reads EDDRGTLCIS…SPIRKTRGDD (245 aa). A disulfide bridge links cysteine 129 with cysteine 371. [4Fe-4S] cluster-binding residues include cysteine 136, cysteine 140, and cysteine 143. S-adenosyl-L-methionine-binding positions include 195–196, serine 227, 249–251, and asparagine 328; these read GE and SFH. The active-site S-methylcysteine intermediate is cysteine 371.

This sequence belongs to the radical SAM superfamily. RlmN family. The cofactor is [4Fe-4S] cluster.

The protein localises to the cytoplasm. It catalyses the reaction adenosine(2503) in 23S rRNA + 2 reduced [2Fe-2S]-[ferredoxin] + 2 S-adenosyl-L-methionine = 2-methyladenosine(2503) in 23S rRNA + 5'-deoxyadenosine + L-methionine + 2 oxidized [2Fe-2S]-[ferredoxin] + S-adenosyl-L-homocysteine. The enzyme catalyses adenosine(37) in tRNA + 2 reduced [2Fe-2S]-[ferredoxin] + 2 S-adenosyl-L-methionine = 2-methyladenosine(37) in tRNA + 5'-deoxyadenosine + L-methionine + 2 oxidized [2Fe-2S]-[ferredoxin] + S-adenosyl-L-homocysteine. Functionally, specifically methylates position 2 of adenine 2503 in 23S rRNA and position 2 of adenine 37 in tRNAs. m2A2503 modification seems to play a crucial role in the proofreading step occurring at the peptidyl transferase center and thus would serve to optimize ribosomal fidelity. The polypeptide is Dual-specificity RNA methyltransferase RlmN (Ruegeria sp. (strain TM1040) (Silicibacter sp.)).